The chain runs to 399 residues: Telomeric repeat-binding factor 2-interacting protein 1 (399 aa).

A2 bears the N-acetylalanine mark. 2 positions are modified to phosphoserine: S36 and S43. Positions 78-101 constitute a BRCT domain; sequence FISTQYILDCVERNERLELEAYRL. The interval 104–132 is disordered; that stretch reads ASAADTGSEAKPGALAEGAAEPEPQRHAG. Over residues 112 to 125 the composition is skewed to low complexity; it reads EAKPGALAEGAAEP. K114 is covalently cross-linked (Glycyl lysine isopeptide (Lys-Gly) (interchain with G-Cter in SUMO2)). One can recognise a Myb-like domain in the interval 128 to 188; the sequence is QRHAGRIAFT…SLKDRYLKHL (61 aa). Residues S154 and S156 each carry the phosphoserine modification. K194 is covalently cross-linked (Glycyl lysine isopeptide (Lys-Gly) (interchain with G-Cter in SUMO2)). Disordered stretches follow at residues 196 to 244 and 264 to 311; these read LLGD…EEIQ and VVVD…QPEV. S203 and S206 each carry phosphoserine. Glycyl lysine isopeptide (Lys-Gly) (interchain with G-Cter in SUMO2) cross-links involve residues K208, K212, and K240. Acidic residues predominate over residues 280–304; sequence CDDDPPTPEEDSETQPDEEEEEEEE. K372 participates in a covalent cross-link: Glycyl lysine isopeptide (Lys-Gly) (interchain with G-Cter in SUMO2). Residues 383–399 carry the Nuclear localization signal motif; sequence KKFGAQNVARRIEFRKK.

It belongs to the RAP1 family. In terms of assembly, associates with the I-kappa-B-kinase (IKK) core complex, composed of CHUK, IKBKB and IKBKG. Homodimer. Component of the shelterin complex (telosome) composed of TERF1, TERF2, TINF2, TERF2IP ACD and POT1. Interacts with TERF2; the interaction is direct. Does not interact with TERF1. Interacts with SLX4/BTBD12. In terms of tissue distribution, ubiquitous. Highly expressed.

The protein localises to the nucleus. Its subcellular location is the cytoplasm. The protein resides in the chromosome. It is found in the telomere. Its function is as follows. Acts both as a regulator of telomere function and as a transcription regulator. Involved in the regulation of telomere length and protection as a component of the shelterin complex (telosome). In contrast to other components of the shelterin complex, it is dispensible for telomere capping and does not participate in the protection of telomeres against non-homologous end-joining (NHEJ)-mediated repair. Instead, it is required to negatively regulate telomere recombination and is essential for repressing homology-directed repair (HDR), which can affect telomere length. Does not bind DNA directly: recruited to telomeric double-stranded 5'-TTAGGG-3' repeats via its interaction with TERF2. Independently of its function in telomeres, also acts as a transcription regulator: recruited to extratelomeric 5'-TTAGGG-3' sites via its association with TERF2 or other factors, and regulates gene expression. When cytoplasmic, associates with the I-kappa-B-kinase (IKK) complex and acts as a regulator of the NF-kappa-B signaling by promoting IKK-mediated phosphorylation of RELA/p65, leading to activate expression of NF-kappa-B target genes. The protein is Telomeric repeat-binding factor 2-interacting protein 1 (TERF2IP) of Homo sapiens (Human).